The primary structure comprises 536 residues: Carboxypeptidase Y homolog A (536 aa).

The signal sequence occupies residues methionine 1 to alanine 17. A propeptide spanning residues glutamine 18–lysine 124 is cleaved from the precursor. 5 disulfides stabilise this stretch: cysteine 172–cysteine 412, cysteine 306–cysteine 320, cysteine 330–cysteine 353, cysteine 337–cysteine 346, and cysteine 375–cysteine 382. A glycan (N-linked (GlcNAc...) asparagine) is linked at asparagine 203. The active site involves serine 259. Residue aspartate 451 is part of the active site. N-linked (GlcNAc...) asparagine glycosylation is present at asparagine 502. The active site involves histidine 513.

The protein belongs to the peptidase S10 family.

The protein localises to the vacuole. The enzyme catalyses Release of a C-terminal amino acid with broad specificity.. Functionally, vacuolar carboxypeptidase involved in degradation of small peptides. Digests preferentially peptides containing an aliphatic or hydrophobic residue in P1' position, as well as methionine, leucine or phenylalanine in P1 position of ester substrate. This Trichophyton rubrum (Athlete's foot fungus) protein is Carboxypeptidase Y homolog A (cpyA).